We begin with the raw amino-acid sequence, 314 residues long: Small ribosomal subunit biogenesis GTPase RsgA (314 aa).

Residues 1-21 (MKRAPTKQPAKPAARGGERAQ) form a disordered region. The region spanning 85–246 (SDQFKSKLFA…LIDSPGFQEF (162 aa)) is the CP-type G domain. GTP-binding positions include 134–137 (NKID) and 188–196 (GQSGMGKST). The Zn(2+) site is built by C270, C275, H277, and C283.

It belongs to the TRAFAC class YlqF/YawG GTPase family. RsgA subfamily. In terms of assembly, monomer. Associates with 30S ribosomal subunit, binds 16S rRNA. The cofactor is Zn(2+).

Its subcellular location is the cytoplasm. Its function is as follows. One of several proteins that assist in the late maturation steps of the functional core of the 30S ribosomal subunit. Helps release RbfA from mature subunits. May play a role in the assembly of ribosomal proteins into the subunit. Circularly permuted GTPase that catalyzes slow GTP hydrolysis, GTPase activity is stimulated by the 30S ribosomal subunit. The sequence is that of Small ribosomal subunit biogenesis GTPase RsgA from Burkholderia pseudomallei (strain 1106a).